We begin with the raw amino-acid sequence, 330 residues long: Quinone oxidoreductase (330 aa).

An N-acetylalanine modification is found at Ala2. The residue at position 23 (Lys23) is an N6-acetyllysine. NADP(+) is bound by residues Tyr53, 158-161, Gly181, His200, Asn229, 246-249, and 269-271; these read SGGV, VGSK, and VTL. Phosphoserine is present on Ser248.

It belongs to the zinc-containing alcohol dehydrogenase family. Quinone oxidoreductase subfamily. Homotetramer.

Its subcellular location is the cytoplasm. It catalyses the reaction 2 a quinone + NADPH + H(+) = 2 a 1,4-benzosemiquinone + NADP(+). Functionally, does not have alcohol dehydrogenase activity. Binds NADP and acts through a one-electron transfer process. Orthoquinones, such as 1,2-naphthoquinone or 9,10-phenanthrenequinone, are the best substrates (in vitro). May act in the detoxification of xenobiotics. Interacts with (AU)-rich elements (ARE) in the 3'-UTR of target mRNA species and enhances their stability. NADPH binding interferes with mRNA binding. This is Quinone oxidoreductase (CRYZ) from Lama guanicoe (Guanaco).